The following is a 1164-amino-acid chain: IgA FC receptor (1164 aa).

An N-terminal signal peptide occupies residues 1 to 37 (MFKSNYERKMRYSIRKFSVGVASVAVASLFMGSVAHA). 2 disordered regions span residues 54–75 (KPYPSMAQTDQGNNSSSSELET) and 167–220 (HEEV…EDKD). The span at 59 to 73 (MAQTDQGNNSSSSEL) shows a compositional bias: polar residues. Basic and acidic residues-rich tracts occupy residues 167–176 (HEEVEKDKKA) and 183–220 (KQSDTKVDLSNIDKELNHQKSQVEKMAEQKGITNEDKD). IgA-binding stretches follow at residues 199 to 438 (NHQK…KIEL) and 439 to 826 (TVSP…ETNT). In terms of domain architecture, Ig-like spans 434 to 534 (QKIELTVSPE…VEKTFTITVQ (101 aa)). Residues 536 to 564 (KEEKQVPKTPEQKDSKTEEKVPQEPKSND) are compositionally biased toward basic and acidic residues. 2 disordered regions span residues 536–567 (KEEKQVPKTPEQKDSKTEEKVPQEPKSNDKNQ) and 823–947 (ETNT…PDGL). Positions 911 to 920 (PKIPEPPKTP) are enriched in pro residues. The LPXTG sorting signal motif lies at 1132 to 1136 (LPYTG). Thr-1135 is modified (pentaglycyl murein peptidoglycan amidated threonine). Positions 1136 to 1164 (GVASNLVLEIMGLLGLIGTSFIAMKRRKS) are cleaved as a propeptide — removed by sortase.

It is found in the secreted. It localises to the cell wall. The chain is IgA FC receptor (bag) from Streptococcus agalactiae.